The primary structure comprises 563 residues: RUN and FYVE domain-containing protein 4 (563 aa).

Residues 33-166 (TETSAELHRL…VAFNLDLQRP (134 aa)) form the RUN domain. Disordered regions lie at residues 176-327 (SESR…TTEG) and 375-397 (KKSS…MQED). 2 stretches are compositionally biased toward basic and acidic residues: residues 196 to 205 (GFPEEVRCSR) and 263 to 284 (ETER…RKFL). Residues 285–295 (ENSTASIQQQR) are compositionally biased toward polar residues. Basic and acidic residues predominate over residues 297-312 (RAKDVKMQLTGRKVEG). The segment covering 385-396 (EWTGVTSGTMQE) has biased composition (polar residues). A coiled-coil region spans residues 421–462 (QAQCQEQLRAQEAELQALQEQLSRCQKERALLQVKLEQKQQE). An FYVE-type zinc finger spans residues 428 to 558 (LRAQEAELQA…RCCPTCAQQE (131 aa)). Zn(2+)-binding residues include C513, C516, C529, C532, C537, C540, C551, and C554.

Forms homodimers (via coiled coil domain). Forms a ternary complex with RAB7A and LAMP2; the interaction with RAB7A is mediated by RUFY4 (via RUN and coiled coil domains). Interacts with GTP-, but not GDP-bound ARL8A and ARL8B. Interacts with dynactin/DCTN1 and the dynein intermediate chain DYNC1I1/2. As to expression, expressed in dendritic cells.

It is found in the cytoplasmic vesicle. It localises to the autophagosome. The protein localises to the lysosome. In terms of biological role, ARL8 effector that promotes the coupling of endolysosomes to dynein-dynactin for retrograde transport along microtubules. Acts by binding both GTP-bound ARL8 and dynein-dynactin. In nonneuronal cells, promotes concentration of endolysosomes in the juxtanuclear area. In hippocampal neurons, drives retrograde transport of endolysosomes from the axon to the soma. Positive regulator of macroautophagy in dendritic cells. Increases autophagic flux, probably by stimulating both autophagosome formation and facilitating tethering with lysosomes. Binds to phosphatidylinositol 3-phosphate (PtdIns3P) through its FYVE-type zinc finger. Positive regulator of osteosclast bone-resorbing activity, possibly by promoting late endosome-lysosome fusion by acting as an adapter protein between RAB7A on late endosomes and LAMP2 on primary lysosomes. This is RUN and FYVE domain-containing protein 4 (Rufy4) from Mus musculus (Mouse).